Consider the following 526-residue polypeptide: Clostripain (526 aa).

Residues 1–27 form the signal peptide; it reads MLRRKVSTLLMTALITTSFLNSKPVYA. Positions 28 to 50 are excised as a propeptide; the sequence is NPVTKSKDNNLKEVQQVTSKSNK. The propeptide at 182–190 is linker; sequence EKSNPRLNR. The active-site Nucleophile is the Cys-231.

It belongs to the peptidase C11 family. Heterodimer of a light chain and a heavy chain held together by strong non-covalent forces rather than by intramolecular disulfide bridges.

The enzyme catalyses Preferential cleavage: Arg-|-Xaa, including Arg-|-Pro bond, but not Lys-|-Xaa.. Its function is as follows. Cysteine endopeptidase with strict specificity. The chain is Clostripain (cloSI) from Hathewaya histolytica (Clostridium histolyticum).